The primary structure comprises 259 residues: Methyltransferase afvD (259 aa).

Belongs to the class I-like SAM-binding methyltransferase superfamily.

It participates in secondary metabolite biosynthesis. Its function is as follows. Methyltransferase; part of the gene cluster that mediates the biosynthesis of aflavarin, a bicoumarin that exhibits anti-insectan activity against the fungivorous beetle C.hemipterus. This chain is Methyltransferase afvD, found in Aspergillus flavus (strain ATCC 200026 / FGSC A1120 / IAM 13836 / NRRL 3357 / JCM 12722 / SRRC 167).